A 226-amino-acid chain; its full sequence is Leucyl/phenylalanyl-tRNA--protein transferase (226 aa).

Belongs to the L/F-transferase family.

Its subcellular location is the cytoplasm. The enzyme catalyses N-terminal L-lysyl-[protein] + L-leucyl-tRNA(Leu) = N-terminal L-leucyl-L-lysyl-[protein] + tRNA(Leu) + H(+). It carries out the reaction N-terminal L-arginyl-[protein] + L-leucyl-tRNA(Leu) = N-terminal L-leucyl-L-arginyl-[protein] + tRNA(Leu) + H(+). It catalyses the reaction L-phenylalanyl-tRNA(Phe) + an N-terminal L-alpha-aminoacyl-[protein] = an N-terminal L-phenylalanyl-L-alpha-aminoacyl-[protein] + tRNA(Phe). Functionally, functions in the N-end rule pathway of protein degradation where it conjugates Leu, Phe and, less efficiently, Met from aminoacyl-tRNAs to the N-termini of proteins containing an N-terminal arginine or lysine. The polypeptide is Leucyl/phenylalanyl-tRNA--protein transferase (Pseudomonas aeruginosa (strain LESB58)).